The following is a 164-amino-acid chain: Phosphopantetheine adenylyltransferase (164 aa).

Ser9 serves as a coordination point for substrate. Residues 9–10 (SF) and His17 contribute to the ATP site. Substrate-binding residues include Lys41, Val78, and Arg92. Residues 93–95 (GLR), Glu103, and 128–134 (SRPITAT) contribute to the ATP site.

Belongs to the bacterial CoaD family. As to quaternary structure, homohexamer. It depends on Mg(2+) as a cofactor.

It localises to the cytoplasm. The enzyme catalyses (R)-4'-phosphopantetheine + ATP + H(+) = 3'-dephospho-CoA + diphosphate. It participates in cofactor biosynthesis; coenzyme A biosynthesis; CoA from (R)-pantothenate: step 4/5. Reversibly transfers an adenylyl group from ATP to 4'-phosphopantetheine, yielding dephospho-CoA (dPCoA) and pyrophosphate. The protein is Phosphopantetheine adenylyltransferase of Agrobacterium fabrum (strain C58 / ATCC 33970) (Agrobacterium tumefaciens (strain C58)).